Reading from the N-terminus, the 144-residue chain is Large ribosomal subunit protein uL15 (144 aa).

The segment at Met1–Glu51 is disordered. A compositionally biased stretch (gly residues) spans Arg21–Cys31.

The protein belongs to the universal ribosomal protein uL15 family. As to quaternary structure, part of the 50S ribosomal subunit.

Functionally, binds to the 23S rRNA. The sequence is that of Large ribosomal subunit protein uL15 from Azoarcus sp. (strain BH72).